The following is a 64-amino-acid chain: Temporin-ALg (64 aa).

Residues 1–22 (MFTLKKSLLLLFFLGTINLSLC) form the signal peptide. Positions 23–46 (EQERNAEEERRDDLGERQAEVEKR) are excised as a propeptide. Leucine amide is present on leucine 62.

Belongs to the frog skin active peptide (FSAP) family. Temporin subfamily. As to expression, expressed by the skin glands.

The protein localises to the secreted. Its function is as follows. Antimicrobial peptide with activity against Gram-positive and Gram-negative bacteria and against fungi. Has been tested against S.aureus (MIC=2.5 ug/mL), B.pumilus (MIC=2.5 ug/mL), B.cereus (MIC=30.0 ug/mL), E.coli (MIC=5.0 ug/mL), B.dysenteriae (MIC=10.0 ug/mL), A.cacoaceticus (MIC=30.0 ug/mL), P.aeruginosa (MIC=7.5 ug/mL) and C.albicans (MIC=1.25 ug/mL). Also shows a weak hemolytic activity. The polypeptide is Temporin-ALg (Amolops loloensis (Lolokou Sucker Frog)).